The chain runs to 337 residues: Heat-inducible transcription repressor HrcA (337 aa).

Belongs to the HrcA family.

Its function is as follows. Negative regulator of class I heat shock genes (grpE-dnaK-dnaJ and groELS operons). Prevents heat-shock induction of these operons. The sequence is that of Heat-inducible transcription repressor HrcA from Pseudarthrobacter chlorophenolicus (strain ATCC 700700 / DSM 12829 / CIP 107037 / JCM 12360 / KCTC 9906 / NCIMB 13794 / A6) (Arthrobacter chlorophenolicus).